Consider the following 300-residue polypeptide: Small ribosomal subunit biogenesis GTPase RsgA (300 aa).

Positions arginine 69–phenylalanine 231 constitute a CP-type G domain. GTP contacts are provided by residues asparagine 119–aspartate 122 and glycine 172–threonine 180. 4 residues coordinate Zn(2+): cysteine 255, cysteine 260, histidine 262, and cysteine 268.

Belongs to the TRAFAC class YlqF/YawG GTPase family. RsgA subfamily. As to quaternary structure, monomer. Associates with 30S ribosomal subunit, binds 16S rRNA. The cofactor is Zn(2+).

The protein resides in the cytoplasm. Functionally, one of several proteins that assist in the late maturation steps of the functional core of the 30S ribosomal subunit. Helps release RbfA from mature subunits. May play a role in the assembly of ribosomal proteins into the subunit. Circularly permuted GTPase that catalyzes slow GTP hydrolysis, GTPase activity is stimulated by the 30S ribosomal subunit. The protein is Small ribosomal subunit biogenesis GTPase RsgA of Bordetella bronchiseptica (strain ATCC BAA-588 / NCTC 13252 / RB50) (Alcaligenes bronchisepticus).